We begin with the raw amino-acid sequence, 194 residues long: Thymidylate kinase (194 aa).

An ATP-binding site is contributed by 7-14; the sequence is GVDGVGKS.

The protein belongs to the thymidylate kinase family.

The enzyme catalyses dTMP + ATP = dTDP + ADP. Functionally, phosphorylation of dTMP to form dTDP in both de novo and salvage pathways of dTTP synthesis. This Campylobacter curvus (strain 525.92) protein is Thymidylate kinase.